The following is a 144-amino-acid chain: Transcription antitermination protein NusB (144 aa).

Belongs to the NusB family.

In terms of biological role, involved in transcription antitermination. Required for transcription of ribosomal RNA (rRNA) genes. Binds specifically to the boxA antiterminator sequence of the ribosomal RNA (rrn) operons. The protein is Transcription antitermination protein NusB of Histophilus somni (strain 2336) (Haemophilus somnus).